The primary structure comprises 270 residues: Probable aquaporin NIP-type (270 aa).

A run of 2 helical transmembrane segments spans residues 45–65 and 72–92; these read LIAE…SVAV and VTFP…VYTV. The short motif at 101–103 is the NPA 1 element; the sequence is NPA. 3 consecutive transmembrane segments (helical) span residues 121–141, 160–180, and 188–208; these read LYII…ALLF, SLAI…GVAT, and VAGI…GPIS. The NPA 2 motif lies at 213 to 215; it reads NPA. Residues 231–251 form a helical membrane-spanning segment; it reads WVYVVGPIIGTLAGAFVYNLI.

The protein belongs to the MIP/aquaporin (TC 1.A.8) family. NIP (TC 1.A.8.12) subfamily. Pollen specific.

Its subcellular location is the membrane. Aquaporins facilitate the transport of water and small neutral solutes across cell membranes. The protein is Probable aquaporin NIP-type of Nicotiana alata (Winged tobacco).